The sequence spans 73 residues: Translational regulator CsrA (73 aa).

This sequence belongs to the CsrA/RsmA family. As to quaternary structure, homodimer; the beta-strands of each monomer intercalate to form a hydrophobic core, while the alpha-helices form wings that extend away from the core.

It is found in the cytoplasm. A translational regulator that binds mRNA to regulate translation initiation and/or mRNA stability. Usually binds in the 5'-UTR at or near the Shine-Dalgarno sequence preventing ribosome-binding, thus repressing translation. Its main target seems to be the major flagellin gene, while its function is anatagonized by FliW. The protein is Translational regulator CsrA of Clostridium acetobutylicum (strain ATCC 824 / DSM 792 / JCM 1419 / IAM 19013 / LMG 5710 / NBRC 13948 / NRRL B-527 / VKM B-1787 / 2291 / W).